We begin with the raw amino-acid sequence, 208 residues long: Probable thymidylate kinase (208 aa).

ATP is bound at residue 9–16 (GIDGAGKS).

This sequence belongs to the thymidylate kinase family.

It catalyses the reaction dTMP + ATP = dTDP + ADP. The polypeptide is Probable thymidylate kinase (Thermococcus gammatolerans (strain DSM 15229 / JCM 11827 / EJ3)).